We begin with the raw amino-acid sequence, 202 residues long: uncharacterized protein (202 aa).

This is an uncharacterized protein from Pseudanabaena tenuis (strain PCC 7409).